Here is a 264-residue protein sequence, read N- to C-terminus: Undecaprenyl-diphosphatase (264 aa).

8 helical membrane passes run 1–21 (MEISHVIVLALVQGISEFLPI), 39–59 (QGLAFDVAVHVGTLSAILFYF), 83–103 (SLLVWCVGFATIPVGIFGLLF), 113–133 (SGVVIAVTTIIFGIALYFADL), 143–163 (MTIKFALIIGLAQAVALIPGV), 184–204 (ANFSFLLSIPVIILAGGLESI), 220–240 (LGVIISAVSAYICVKLFMGII), and 243–263 (IRMLPFVIYRLILGAFLLYLF).

It belongs to the UppP family.

It is found in the cell inner membrane. The enzyme catalyses di-trans,octa-cis-undecaprenyl diphosphate + H2O = di-trans,octa-cis-undecaprenyl phosphate + phosphate + H(+). In terms of biological role, catalyzes the dephosphorylation of undecaprenyl diphosphate (UPP). Confers resistance to bacitracin. In Campylobacter concisus (strain 13826), this protein is Undecaprenyl-diphosphatase.